The sequence spans 156 residues: Small ribosomal subunit protein uS7 (156 aa).

The protein belongs to the universal ribosomal protein uS7 family. Part of the 30S ribosomal subunit. Contacts proteins S9 and S11.

Its function is as follows. One of the primary rRNA binding proteins, it binds directly to 16S rRNA where it nucleates assembly of the head domain of the 30S subunit. Is located at the subunit interface close to the decoding center, probably blocks exit of the E-site tRNA. This chain is Small ribosomal subunit protein uS7, found in Neisseria meningitidis serogroup C (strain 053442).